The following is a 185-amino-acid chain: Ribosome-recycling factor (185 aa).

The protein belongs to the RRF family.

The protein localises to the cytoplasm. Responsible for the release of ribosomes from messenger RNA at the termination of protein biosynthesis. May increase the efficiency of translation by recycling ribosomes from one round of translation to another. This is Ribosome-recycling factor from Shouchella clausii (strain KSM-K16) (Alkalihalobacillus clausii).